A 454-amino-acid polypeptide reads, in one-letter code: Asparagine--tRNA ligase (454 aa).

Belongs to the class-II aminoacyl-tRNA synthetase family. In terms of assembly, homodimer.

The protein resides in the cytoplasm. It catalyses the reaction tRNA(Asn) + L-asparagine + ATP = L-asparaginyl-tRNA(Asn) + AMP + diphosphate + H(+). This chain is Asparagine--tRNA ligase, found in Mycoplasma capricolum subsp. capricolum (strain California kid / ATCC 27343 / NCTC 10154).